The sequence spans 274 residues: 4-diphosphocytidyl-2-C-methyl-D-erythritol kinase (274 aa).

K10 is a catalytic residue. P101 to A111 provides a ligand contact to ATP. The active site involves D143.

Belongs to the GHMP kinase family. IspE subfamily.

The enzyme catalyses 4-CDP-2-C-methyl-D-erythritol + ATP = 4-CDP-2-C-methyl-D-erythritol 2-phosphate + ADP + H(+). The protein operates within isoprenoid biosynthesis; isopentenyl diphosphate biosynthesis via DXP pathway; isopentenyl diphosphate from 1-deoxy-D-xylulose 5-phosphate: step 3/6. Its function is as follows. Catalyzes the phosphorylation of the position 2 hydroxy group of 4-diphosphocytidyl-2C-methyl-D-erythritol. The chain is 4-diphosphocytidyl-2-C-methyl-D-erythritol kinase from Helicobacter pylori (strain HPAG1).